Reading from the N-terminus, the 505-residue chain is Tyrosine-protein kinase isoform SRK1 (505 aa).

2 stretches are compositionally biased toward polar residues: residues 1-10 (MGSCCSSQDG) and 18-31 (AGST…SQSV). Positions 1-53 (MGSCCSSQDGDGNGKATAGSTVDSHELSQSVKGKIKQPEPKPKPPPQVPPAQD) are disordered. The 63-residue stretch at 54–116 (VKYPIYVGKY…PSNYVAEYKS (63 aa)) folds into the SH3 domain. Positions 122 to 214 (WFLGKIKRVE…GLCCKLLYPC (93 aa)) constitute an SH2 domain. The Protein kinase domain occupies 240–493 (IKLLRRLGAG…TLQWQLEEFF (254 aa)). ATP-binding positions include 246–254 (LGAGQFGEV) and Lys-268. Residue Asp-359 is the Proton acceptor of the active site.

This sequence belongs to the protein kinase superfamily. Tyr protein kinase family. SRC subfamily.

The protein localises to the cytoplasm. The catalysed reaction is L-tyrosyl-[protein] + ATP = O-phospho-L-tyrosyl-[protein] + ADP + H(+). This Spongilla lacustris (Freshwater sponge) protein is Tyrosine-protein kinase isoform SRK1 (SRK1).